A 331-amino-acid chain; its full sequence is Mitochondrial carrier protein CoAc1 (331 aa).

A run of 6 helical transmembrane segments spans residues 16-36 (LVDT…AGAI), 79-99 (FYKG…LHYM), 123-143 (LVAG…LDLA), 193-213 (GIGP…YIYE), 231-251 (LPCG…LDVV), and 292-312 (FAGL…GFTV). Solcar repeat units lie at residues 21 to 107 (PVLA…YRDW), 117 to 218 (SGPI…LKRH), and 225 to 319 (NSVR…MKSW).

Belongs to the mitochondrial carrier (TC 2.A.29) family. In terms of tissue distribution, expressed throughout the plant.

Its subcellular location is the mitochondrion inner membrane. Its function is as follows. Required for the accumulation of coenzyme A in the mitochondrial matrix. This Arabidopsis thaliana (Mouse-ear cress) protein is Mitochondrial carrier protein CoAc1.